The sequence spans 137 residues: Nucleoside diphosphate kinase (137 aa).

Residues Lys-9, Phe-57, Arg-85, Thr-91, Arg-102, and Asn-112 each coordinate ATP. The Pros-phosphohistidine intermediate role is filled by His-115.

It belongs to the NDK family. In terms of assembly, homotetramer. Mg(2+) is required as a cofactor.

The protein localises to the cytoplasm. It catalyses the reaction a 2'-deoxyribonucleoside 5'-diphosphate + ATP = a 2'-deoxyribonucleoside 5'-triphosphate + ADP. It carries out the reaction a ribonucleoside 5'-diphosphate + ATP = a ribonucleoside 5'-triphosphate + ADP. Its function is as follows. Major role in the synthesis of nucleoside triphosphates other than ATP. The ATP gamma phosphate is transferred to the NDP beta phosphate via a ping-pong mechanism, using a phosphorylated active-site intermediate. The protein is Nucleoside diphosphate kinase of Thermus thermophilus (strain ATCC 27634 / DSM 579 / HB8).